The following is a 963-amino-acid chain: Non-ribosomal peptide synthetase CmlP (963 aa).

The Carrier domain occupies 492–568 (GEDAAELRRV…AAFLRHLRGE (77 aa)). At Ser-526 the chain carries O-(pantetheine 4'-phosphoryl)serine. Residues 928–963 (GRLLGTPPDTPAGDRPERTGTTAEAQNGAAHAPTPR) are disordered.

Belongs to the ATP-dependent AMP-binding enzyme family. Pantetheine 4'-phosphate serves as cofactor.

It catalyses the reaction 4-amino-L-phenylalanine + holo-[peptidyl-carrier protein] + ATP = 4-amino-L-phenylalanyl-[peptidyl-carrier protein] + AMP + diphosphate. It functions in the pathway antibiotic biosynthesis. In terms of biological role, involved in chloramphenicol biosynthesis. Activates 4-amino-L-phenylalanine by adenylation and loads it onto its peptidyl carrier domain, via a thioester linkage to the phosphopanthetheine moiety. Can also adenylate tyrosine and phenylalanine at low rates, but not L-p-nitrophenylalanine or threo-phenylserine. The polypeptide is Non-ribosomal peptide synthetase CmlP (Streptomyces venezuelae (strain ATCC 10712 / CBS 650.69 / DSM 40230 / JCM 4526 / NBRC 13096 / PD 04745)).